Here is a 406-residue protein sequence, read N- to C-terminus: Probable endo-xylogalacturonan hydrolase A (406 aa).

Positions 1–18 are cleaved as a signal peptide; that stretch reads MISLNSIFLLSLVGLSRA. Residues 20-49 form a disordered region; the sequence is PSRSETSPDRTIKPRAACTPTAGGSSSTDD. PbH1 repeat units lie at residues 183 to 213, 214 to 235, 237 to 257, 266 to 289, 299 to 320, and 368 to 390; these read TSNAQFTSLTMDATSNSDNLPKNTDAFDIGA, STYVTISSVAITNDDDCVAFKP, ANYVTVENVSCTGSHGISVGS, VQNVYARNITMINSSKAAGIKTYP, VKNATFEDFIVDGCDYAFQIQS, and TCDVTISGFEVKAPSGDAKILCG. Aspartate 228 functions as the Proton donor in the catalytic mechanism. Asparagine 244 carries an N-linked (GlcNAc...) asparagine glycan. Histidine 251 is an active-site residue. Asparagine 273, asparagine 278, and asparagine 301 each carry an N-linked (GlcNAc...) asparagine glycan.

The protein belongs to the glycosyl hydrolase 28 family.

The protein resides in the secreted. Pectinolytic enzyme involved in the degradation of xylogalacturonan (xga), a galacturonan backbone heavily substituted with xylose, and which is one important component of the hairy regions of pectin. Activity requires a galacturonic acid backbone substituted with xylose. The polypeptide is Probable endo-xylogalacturonan hydrolase A (xghA) (Aspergillus flavus (strain ATCC 200026 / FGSC A1120 / IAM 13836 / NRRL 3357 / JCM 12722 / SRRC 167)).